The chain runs to 362 residues: Phosphoserine aminotransferase (362 aa).

L-glutamate contacts are provided by serine 9 and arginine 42. Residues 76–77, tryptophan 102, threonine 153, aspartate 174, and glutamine 197 contribute to the pyridoxal 5'-phosphate site; that span reads GR. The residue at position 198 (lysine 198) is an N6-(pyridoxal phosphate)lysine. 239 to 240 provides a ligand contact to pyridoxal 5'-phosphate; sequence NT.

The protein belongs to the class-V pyridoxal-phosphate-dependent aminotransferase family. SerC subfamily. As to quaternary structure, homodimer. Requires pyridoxal 5'-phosphate as cofactor.

The protein localises to the cytoplasm. It carries out the reaction O-phospho-L-serine + 2-oxoglutarate = 3-phosphooxypyruvate + L-glutamate. The enzyme catalyses 4-(phosphooxy)-L-threonine + 2-oxoglutarate = (R)-3-hydroxy-2-oxo-4-phosphooxybutanoate + L-glutamate. It functions in the pathway amino-acid biosynthesis; L-serine biosynthesis; L-serine from 3-phospho-D-glycerate: step 2/3. Its pathway is cofactor biosynthesis; pyridoxine 5'-phosphate biosynthesis; pyridoxine 5'-phosphate from D-erythrose 4-phosphate: step 3/5. Catalyzes the reversible conversion of 3-phosphohydroxypyruvate to phosphoserine and of 3-hydroxy-2-oxo-4-phosphonooxybutanoate to phosphohydroxythreonine. Is involved in both pyridoxine and serine biosynthesis. This is Phosphoserine aminotransferase (serC) from Escherichia coli (strain K12).